We begin with the raw amino-acid sequence, 651 residues long: Beta-glucuronidase (651 aa).

The signal sequence occupies residues 1-22 (MARGSAVAWAALGPLLWGCALG). N-linked (GlcNAc...) asparagine glycans are attached at residues Asn-173, Asn-272, and Asn-420. Glu-451 acts as the Proton donor in catalysis. Asn-631 carries an N-linked (GlcNAc...) asparagine glycan.

Belongs to the glycosyl hydrolase 2 family. As to quaternary structure, homotetramer. Post-translationally, N-linked glycosylated with 3 to 4 oligosaccharide chains.

The protein localises to the lysosome. It catalyses the reaction a beta-D-glucuronoside + H2O = D-glucuronate + an alcohol. Inhibited by L-aspartic acid. Plays an important role in the degradation of dermatan and keratan sulfates. In Homo sapiens (Human), this protein is Beta-glucuronidase (GUSB).